Reading from the N-terminus, the 320-residue chain is HPr kinase/phosphorylase (320 aa).

Active-site residues include histidine 141 and lysine 162. Residue 156-163 (GHSGLGKS) participates in ATP binding. Serine 163 is a Mg(2+) binding site. Aspartate 180 serves as the catalytic Proton acceptor; for phosphorylation activity. Proton donor; for dephosphorylation activity. The important for the catalytic mechanism of both phosphorylation and dephosphorylation stretch occupies residues 204–213 (LEVRGLGILN). Glutamate 205 contributes to the Mg(2+) binding site. The active site involves arginine 248. The important for the catalytic mechanism of dephosphorylation stretch occupies residues 269–274 (PVAVGR).

This sequence belongs to the HPrK/P family. As to quaternary structure, homohexamer. Mg(2+) serves as cofactor.

It carries out the reaction [HPr protein]-L-serine + ATP = [HPr protein]-O-phospho-L-serine + ADP + H(+). It catalyses the reaction [HPr protein]-O-phospho-L-serine + phosphate + H(+) = [HPr protein]-L-serine + diphosphate. Catalyzes the ATP- as well as the pyrophosphate-dependent phosphorylation of a specific serine residue in HPr, a phosphocarrier protein of the phosphoenolpyruvate-dependent sugar phosphotransferase system (PTS). HprK/P also catalyzes the pyrophosphate-producing, inorganic phosphate-dependent dephosphorylation (phosphorolysis) of seryl-phosphorylated HPr (P-Ser-HPr). This Neisseria gonorrhoeae (strain ATCC 700825 / FA 1090) protein is HPr kinase/phosphorylase.